We begin with the raw amino-acid sequence, 923 residues long: Isoleucine--tRNA ligase (923 aa).

The short motif at Pro57 to His67 is the 'HIGH' region element. Glu553 is a binding site for L-isoleucyl-5'-AMP. Positions Lys594–Ser598 match the 'KMSKS' region motif. Lys597 is a binding site for ATP. Zn(2+) is bound by residues Cys888, Cys891, Cys908, and Cys911.

Belongs to the class-I aminoacyl-tRNA synthetase family. IleS type 1 subfamily. Monomer. Zn(2+) serves as cofactor.

Its subcellular location is the cytoplasm. The enzyme catalyses tRNA(Ile) + L-isoleucine + ATP = L-isoleucyl-tRNA(Ile) + AMP + diphosphate. Functionally, catalyzes the attachment of isoleucine to tRNA(Ile). As IleRS can inadvertently accommodate and process structurally similar amino acids such as valine, to avoid such errors it has two additional distinct tRNA(Ile)-dependent editing activities. One activity is designated as 'pretransfer' editing and involves the hydrolysis of activated Val-AMP. The other activity is designated 'posttransfer' editing and involves deacylation of mischarged Val-tRNA(Ile). This chain is Isoleucine--tRNA ligase, found in Shouchella clausii (strain KSM-K16) (Alkalihalobacillus clausii).